The chain runs to 295 residues: Putative clathrin assembly protein At5g65370 (295 aa).

The 144-residue stretch at 26 to 169 folds into the ENTH domain; that stretch reads CSSVNAKTID…SIAEVLGITP (144 aa).

It is found in the membrane. It localises to the clathrin-coated pit. The protein localises to the golgi apparatus. The protein resides in the cytoplasmic vesicle. Its subcellular location is the clathrin-coated vesicle. The protein is Putative clathrin assembly protein At5g65370 of Arabidopsis thaliana (Mouse-ear cress).